Consider the following 677-residue polypeptide: Nucleolar protein 9 (677 aa).

Residues 1 to 12 are compositionally biased toward basic residues; the sequence is MAKPRGRKLLKK. The tract at residues 1–50 is disordered; that stretch reads MAKPRGRKLLKKQQKDQFEPSNDVEKFEDDRDHQENVYQGDAADSEKSSD. A compositionally biased stretch (basic and acidic residues) spans 13–35; it reads QQKDQFEPSNDVEKFEDDRDHQE. 8 Pumilio repeats span residues 94 to 129, 130 to 165, 193 to 228, 287 to 331, 339 to 374, 375 to 412, 516 to 553, and 554 to 592; these read EAKG…SVFK, AFNG…ELLT, ELKP…SSTK, DISP…LVFN, KEEA…RLYH, LYMK…QILD, NLPE…RLLL, and NVLS…RIAQ. The interval 639–677 is disordered; the sequence is PNAVKPQPKNQQFKNNGNDNKRSSDSNYSSSSNFKKQRR. Over residues 646 to 655 the composition is skewed to polar residues; that stretch reads PKNQQFKNNG.

The protein belongs to the NOP9 family.

Its subcellular location is the nucleus. It localises to the nucleolus. RNA-binding nucleolar protein required for pre-rRNA processing. Involved in production of 18S rRNA and assembly of small ribosomal subunit. The chain is Nucleolar protein 9 (NOP9) from Vanderwaltozyma polyspora (strain ATCC 22028 / DSM 70294 / BCRC 21397 / CBS 2163 / NBRC 10782 / NRRL Y-8283 / UCD 57-17) (Kluyveromyces polysporus).